The following is a 208-amino-acid chain: dITP/XTP pyrophosphatase (208 aa).

Position 7 to 12 (7 to 12) interacts with substrate; sequence SNNAKK. Positions 39 and 68 each coordinate Mg(2+). The Proton acceptor role is filled by aspartate 68. Substrate contacts are provided by residues serine 69, 162-165, lysine 185, and 190-191; these read FGYD and HR.

It belongs to the HAM1 NTPase family. In terms of assembly, homodimer. It depends on Mg(2+) as a cofactor.

The catalysed reaction is XTP + H2O = XMP + diphosphate + H(+). It catalyses the reaction dITP + H2O = dIMP + diphosphate + H(+). The enzyme catalyses ITP + H2O = IMP + diphosphate + H(+). Pyrophosphatase that catalyzes the hydrolysis of nucleoside triphosphates to their monophosphate derivatives, with a high preference for the non-canonical purine nucleotides XTP (xanthosine triphosphate), dITP (deoxyinosine triphosphate) and ITP. Seems to function as a house-cleaning enzyme that removes non-canonical purine nucleotides from the nucleotide pool, thus preventing their incorporation into DNA/RNA and avoiding chromosomal lesions. The polypeptide is dITP/XTP pyrophosphatase (Methylibium petroleiphilum (strain ATCC BAA-1232 / LMG 22953 / PM1)).